A 212-amino-acid polypeptide reads, in one-letter code: Lipid A acyltransferase PagP (212 aa).

Positions 1 to 24 (MYLKRTLITLSLITLPIVPFLSYA) are cleaved as a signal peptide. The span at 36-47 (NLAPVTVDSSDP) shows a compositional bias: polar residues. Residues 36–56 (NLAPVTVDSSDPVSDKQGESW) are disordered. Active-site residues include H84, D127, and S128.

It belongs to the lipid A palmitoyltransferase family. As to quaternary structure, homodimer.

The protein localises to the cell outer membrane. The catalysed reaction is a lipid A + a 1,2-diacyl-sn-glycero-3-phosphocholine = a hepta-acyl lipid A + a 2-acyl-sn-glycero-3-phosphocholine. It catalyses the reaction a lipid IVA + a 1,2-diacyl-sn-glycero-3-phosphocholine = a lipid IVB + a 2-acyl-sn-glycero-3-phosphocholine. It carries out the reaction a lipid IIA + a 1,2-diacyl-sn-glycero-3-phosphocholine = a lipid IIB + a 2-acyl-sn-glycero-3-phosphocholine. In terms of biological role, transfers a fatty acid residue from the sn-1 position of a phospholipid to the N-linked hydroxyfatty acid chain on the proximal unit of lipid A or its precursors. The sequence is that of Lipid A acyltransferase PagP from Pectobacterium carotovorum subsp. carotovorum (strain PC1).